The primary structure comprises 109 residues: Ribulose bisphosphate carboxylase small subunit (109 aa).

This sequence belongs to the RuBisCO small chain family. Heterohexadecamer of 8 large and 8 small subunits.

It localises to the carboxysome. Its function is as follows. RuBisCO catalyzes two reactions: the carboxylation of D-ribulose 1,5-bisphosphate, the primary event in carbon dioxide fixation, as well as the oxidative fragmentation of the pentose substrate in the photorespiration process. Both reactions occur simultaneously and in competition at the same active site. Although the small subunit is not catalytic it is essential for maximal activity. The protein is Ribulose bisphosphate carboxylase small subunit of Prochlorothrix hollandica.